An 80-amino-acid chain; its full sequence is Acyl carrier protein (80 aa).

The Carrier domain occupies N4–Q79. O-(pantetheine 4'-phosphoryl)serine is present on S39.

Belongs to the acyl carrier protein (ACP) family. Post-translationally, 4'-phosphopantetheine is transferred from CoA to a specific serine of apo-ACP by AcpS. This modification is essential for activity because fatty acids are bound in thioester linkage to the sulfhydryl of the prosthetic group.

The protein localises to the cytoplasm. It participates in lipid metabolism; fatty acid biosynthesis. Carrier of the growing fatty acid chain in fatty acid biosynthesis. The chain is Acyl carrier protein from Akkermansia muciniphila (strain ATCC BAA-835 / DSM 22959 / JCM 33894 / BCRC 81048 / CCUG 64013 / CIP 107961 / Muc).